Reading from the N-terminus, the 38-residue chain is Large ribosomal subunit protein bL36 (38 aa).

This sequence belongs to the bacterial ribosomal protein bL36 family.

The sequence is that of Large ribosomal subunit protein bL36 from Hahella chejuensis (strain KCTC 2396).